The primary structure comprises 511 residues: GMP synthase [glutamine-hydrolyzing] (511 aa).

The region spanning 3–193 (KILILDFGGQ…VYSICDVAGD (191 aa)) is the Glutamine amidotransferase type-1 domain. The active-site Nucleophile is the Cys80. Active-site residues include His167 and Glu169. One can recognise a GMPS ATP-PPase domain in the interval 194–384 (WEPKNIKLEK…LDIPYQNVYR (191 aa)). 221-227 (SGGVDSL) serves as a coordination point for ATP.

Homodimer.

It catalyses the reaction XMP + L-glutamine + ATP + H2O = GMP + L-glutamate + AMP + diphosphate + 2 H(+). Its pathway is purine metabolism; GMP biosynthesis; GMP from XMP (L-Gln route): step 1/1. In terms of biological role, catalyzes the synthesis of GMP from XMP. This is GMP synthase [glutamine-hydrolyzing] from Malacoplasma penetrans (strain HF-2) (Mycoplasma penetrans).